The sequence spans 155 residues: Small ribosomal subunit protein uS7cz/uS7cy (155 aa).

The protein belongs to the universal ribosomal protein uS7 family. In terms of assembly, part of the 30S ribosomal subunit.

Its subcellular location is the plastid. It is found in the chloroplast. In terms of biological role, one of the primary rRNA binding proteins, it binds directly to 16S rRNA where it nucleates assembly of the head domain of the 30S subunit. This is Small ribosomal subunit protein uS7cz/uS7cy (rps7-A) from Psilotum nudum (Whisk fern).